The chain runs to 385 residues: uncharacterized protein (385 aa).

3 residues coordinate Zn(2+): D180, H258, and H275.

Belongs to the iron-containing alcohol dehydrogenase family. It depends on Zn(2+) as a cofactor.

This is an uncharacterized protein from Synechocystis sp. (strain ATCC 27184 / PCC 6803 / Kazusa).